A 236-amino-acid chain; its full sequence is tRNA (guanine-N(7)-)-methyltransferase (236 aa).

S-adenosyl-L-methionine-binding residues include D35, E60, N87, and D113. The active site involves D113. Positions 117 and 149 each coordinate substrate. The segment at 217–236 (EFEQHWQEIDNPGNAPTPDA) is disordered.

Belongs to the class I-like SAM-binding methyltransferase superfamily. TrmB family.

The enzyme catalyses guanosine(46) in tRNA + S-adenosyl-L-methionine = N(7)-methylguanosine(46) in tRNA + S-adenosyl-L-homocysteine. It functions in the pathway tRNA modification; N(7)-methylguanine-tRNA biosynthesis. Catalyzes the formation of N(7)-methylguanine at position 46 (m7G46) in tRNA. In Synechococcus sp. (strain CC9902), this protein is tRNA (guanine-N(7)-)-methyltransferase.